Here is a 537-residue protein sequence, read N- to C-terminus: CTP synthase (537 aa).

The amidoligase domain stretch occupies residues methionine 1–isoleucine 265. A CTP-binding site is contributed by serine 13. Position 13 (serine 13) interacts with UTP. ATP is bound by residues serine 14 to leucine 19 and aspartate 71. Positions 71 and 139 each coordinate Mg(2+). Residues aspartate 146–glutamate 148 and lysine 222 each bind CTP. Residue lysine 222 participates in UTP binding. Residues arginine 290–cysteine 536 enclose the Glutamine amidotransferase type-1 domain. Glycine 352 is a binding site for L-glutamine. Cysteine 379 serves as the catalytic Nucleophile; for glutamine hydrolysis. L-glutamine contacts are provided by residues phenylalanine 380–glutamine 383, glutamate 403, and arginine 464. Catalysis depends on residues histidine 509 and glutamate 511.

Belongs to the CTP synthase family. Homotetramer.

It carries out the reaction UTP + L-glutamine + ATP + H2O = CTP + L-glutamate + ADP + phosphate + 2 H(+). It catalyses the reaction L-glutamine + H2O = L-glutamate + NH4(+). The catalysed reaction is UTP + NH4(+) + ATP = CTP + ADP + phosphate + 2 H(+). It functions in the pathway pyrimidine metabolism; CTP biosynthesis via de novo pathway; CTP from UDP: step 2/2. Its activity is regulated as follows. Allosterically activated by GTP, when glutamine is the substrate; GTP has no effect on the reaction when ammonia is the substrate. The allosteric effector GTP functions by stabilizing the protein conformation that binds the tetrahedral intermediate(s) formed during glutamine hydrolysis. Inhibited by the product CTP, via allosteric rather than competitive inhibition. Functionally, catalyzes the ATP-dependent amination of UTP to CTP with either L-glutamine or ammonia as the source of nitrogen. Regulates intracellular CTP levels through interactions with the four ribonucleotide triphosphates. The chain is CTP synthase from Rickettsia conorii (strain ATCC VR-613 / Malish 7).